The primary structure comprises 310 residues: MVVSEKSKILIIGGTGYIGKYLVETSAKSGHPTFALIRESTLKNPEKSKLIDTFKSYGVTLLFGDISNQESLLKAIKQVDVVISTVGGQQFTDQVNIIKAIKEAGNIKRFLPSEFGFDVDHARAIEPAASLFALKVRIRRMIEAEGIPYTYVICNWFADFFLPNLGQLEAKTPPRDKVVIFGDGNPKAIYVKEEDIATYTIEAVDDPRTLNKTLHMRPPANILSFNEIVSLWEDKIGKTLEKLYLSEEDILQIVQEGPLPLRTNLAICHSVFVNGDSANFEVQPPTGVEATELYPKVKYTTVDEFYNKFV.

Residues 13-19, R38, and K47 each bind NADP(+); that span reads GGTGYIG. K135 functions as the Proton acceptor in the catalytic mechanism. R139 provides a ligand contact to NADP(+).

Belongs to the NmrA-type oxidoreductase family. Isoflavone reductase subfamily. In terms of assembly, monomer. Expressed in roots and stems.

The protein localises to the cytoplasm. It functions in the pathway alkaloid biosynthesis; nicotine biosynthesis. Functionally, NADPH-binding protein. Involved in the biosynthesis of pyridine alkaloid natural products, leading mainly to the production of anabasine, anatabine, nicotine and nornicotine, effective deterrents against herbivores with antiparasitic and pesticide properties (neurotoxins); nornicotine serves as the precursor in the synthesis of the carcinogen compound N'-nitrosonornicotine (NNN). Reductase involved in a late step of tobacco alkaloid biosynthesis. Triggers either the formation of a nicotinic acid-derived precursor or the final condensation reaction of tobacco alkaloids. This Nicotiana sylvestris (Wood tobacco) protein is Isoflavone reductase homolog A622.